A 265-amino-acid chain; its full sequence is Undecaprenyl-diphosphatase (265 aa).

Helical transmembrane passes span 7 to 27, 45 to 65, 86 to 106, 108 to 128, 145 to 165, 186 to 206, 214 to 234, and 245 to 265; these read IIVS…PISS, TKIL…YFFH, LHII…YKKI, LLFN…FLLI, ISLL…YPGF, IEFS…YDFI, ILDL…SILC, and TSLI…YFIN.

This sequence belongs to the UppP family.

It localises to the cell membrane. It catalyses the reaction di-trans,octa-cis-undecaprenyl diphosphate + H2O = di-trans,octa-cis-undecaprenyl phosphate + phosphate + H(+). Its function is as follows. Catalyzes the dephosphorylation of undecaprenyl diphosphate (UPP). Confers resistance to bacitracin. The sequence is that of Undecaprenyl-diphosphatase from Buchnera aphidicola subsp. Acyrthosiphon pisum (strain Tuc7).